The sequence spans 725 residues: D-(-)-3-hydroxybutyrate oligomer hydrolase (725 aa).

Residues 1–22 (MNTTRDANRLRQRASLSGLALA) form the signal peptide. The active-site Charge relay system is the S322.

It belongs to the D-(-)-3-hydroxybutyrate oligomer hydrolase family.

It localises to the secreted. The catalysed reaction is (3R)-hydroxybutanoate dimer + H2O = 2 (R)-3-hydroxybutanoate + H(+). The protein operates within lipid metabolism; butanoate metabolism. Functionally, participates in the degradation of poly-3-hydroxybutyrate (PHB). It works downstream of poly(3-hydroxybutyrate) depolymerase, hydrolyzing D(-)-3-hydroxybutyrate oligomers of various length (3HB-oligomers) into 3HB-monomers. The sequence is that of D-(-)-3-hydroxybutyrate oligomer hydrolase from Ralstonia nicotianae (strain ATCC BAA-1114 / GMI1000) (Ralstonia solanacearum).